Here is a 396-residue protein sequence, read N- to C-terminus: Phosphoglycerate kinase (396 aa).

Substrate-binding positions include 21 to 23 (DFN), Arg-36, 59 to 62 (HLGK), Arg-119, and Arg-156. ATP-binding positions include Lys-206, Glu-325, and 352–355 (GGDS).

Belongs to the phosphoglycerate kinase family. As to quaternary structure, monomer.

It is found in the cytoplasm. The catalysed reaction is (2R)-3-phosphoglycerate + ATP = (2R)-3-phospho-glyceroyl phosphate + ADP. Its pathway is carbohydrate degradation; glycolysis; pyruvate from D-glyceraldehyde 3-phosphate: step 2/5. This Staphylococcus saprophyticus subsp. saprophyticus (strain ATCC 15305 / DSM 20229 / NCIMB 8711 / NCTC 7292 / S-41) protein is Phosphoglycerate kinase.